We begin with the raw amino-acid sequence, 756 residues long: Catalase-peroxidase (756 aa).

The tryptophyl-tyrosyl-methioninium (Trp-Tyr) (with M-270) cross-link spans 91–244; the sequence is WHSAGTYRTG…LAAVQMGLIY (154 aa). His-92 functions as the Proton acceptor in the catalytic mechanism. The tract at residues 198–230 is disordered; the sequence is AQKKMQQPGDGTLVAEPENHANEESRTASGERN. Residues 214–223 show a composition bias toward basic and acidic residues; sequence PENHANEESR. A cross-link (tryptophyl-tyrosyl-methioninium (Tyr-Met) (with W-91)) is located at residues 244–270; the sequence is YVNPEGPEGVPDPVASAKDIRETFGRM. His-285 is a heme b binding site. The segment at 371–390 is disordered; it reads KNGAGAGKIPDAHDPSKRHA.

The protein belongs to the peroxidase family. Peroxidase/catalase subfamily. As to quaternary structure, homodimer or homotetramer. Requires heme b as cofactor. Post-translationally, formation of the three residue Trp-Tyr-Met cross-link is important for the catalase, but not the peroxidase activity of the enzyme.

It carries out the reaction H2O2 + AH2 = A + 2 H2O. It catalyses the reaction 2 H2O2 = O2 + 2 H2O. Functionally, bifunctional enzyme with both catalase and broad-spectrum peroxidase activity. This is Catalase-peroxidase from Pseudomonas savastanoi pv. phaseolicola (strain 1448A / Race 6) (Pseudomonas syringae pv. phaseolicola (strain 1448A / Race 6)).